The primary structure comprises 95 residues: Small ribosomal subunit protein bS20 (95 aa).

Disordered stretches follow at residues Met1–Lys26 and Lys76–Ala95. Low complexity predominate over residues Ala80–Ala95.

Belongs to the bacterial ribosomal protein bS20 family.

In terms of biological role, binds directly to 16S ribosomal RNA. This is Small ribosomal subunit protein bS20 from Deinococcus geothermalis (strain DSM 11300 / CIP 105573 / AG-3a).